A 241-amino-acid chain; its full sequence is Probable transcriptional regulatory protein AZOSEA20720 (241 aa).

The tract at residues methionine 1–arginine 21 is disordered.

This sequence belongs to the TACO1 family.

It is found in the cytoplasm. In Aromatoleum aromaticum (strain DSM 19018 / LMG 30748 / EbN1) (Azoarcus sp. (strain EbN1)), this protein is Probable transcriptional regulatory protein AZOSEA20720.